Consider the following 153-residue polypeptide: UPF0756 membrane protein LSL_0936 (153 aa).

The next 5 helical transmembrane spans lie at 4–24 (WIFLGLILLIAYLGKNSSLLI), 26–46 (GAVVIVIKLFPFLSQKLYPVI), 51–71 (INWGVTIISVAILIPIATGQI), 86–106 (WIAVVCGILVAILSKHGVNLL), and 116–136 (LVIGTIIGVVFLKGVAAGPVI).

Belongs to the UPF0756 family.

It is found in the cell membrane. The protein is UPF0756 membrane protein LSL_0936 of Ligilactobacillus salivarius (strain UCC118) (Lactobacillus salivarius).